Consider the following 182-residue polypeptide: tRNA-splicing endonuclease (182 aa).

Residues Tyr-119, His-127, and Lys-158 contribute to the active site.

Belongs to the tRNA-intron endonuclease family. Archaeal short subfamily. Homotetramer; although the tetramer contains four active sites, only two participate in the cleavage. Therefore, it should be considered as a dimer of dimers.

It carries out the reaction pretRNA = a 3'-half-tRNA molecule with a 5'-OH end + a 5'-half-tRNA molecule with a 2',3'-cyclic phosphate end + an intron with a 2',3'-cyclic phosphate and a 5'-hydroxyl terminus.. In terms of biological role, endonuclease that removes tRNA introns. Cleaves pre-tRNA at the 5'- and 3'-splice sites to release the intron. The products are an intron and two tRNA half-molecules bearing 2',3' cyclic phosphate and 5'-OH termini. Recognizes a pseudosymmetric substrate in which 2 bulged loops of 3 bases are separated by a stem of 4 bp. In Saccharolobus solfataricus (strain ATCC 35092 / DSM 1617 / JCM 11322 / P2) (Sulfolobus solfataricus), this protein is tRNA-splicing endonuclease.